Here is a 470-residue protein sequence, read N- to C-terminus: Neuraminidase (470 aa).

Residues M1–S14 lie on the Intravirion side of the membrane. The involved in apical transport and lipid raft association stretch occupies residues G11 to T32. Residues L15–V35 traverse the membrane as a helical segment. A hypervariable stalk region region spans residues T32–T86. Residues L36 to M470 are Virion surface-facing. N-linked (GlcNAc...) asparagine; by host glycans are attached at residues N46, N54, and N84. Residues L89 to M470 form a head of neuraminidase region. 8 disulfide bridges follow: C90/C417, C122/C127, C182/C229, C231/C236, C277/C290, C279/C288, C316/C335, and C421/C446. Residue R116 coordinates substrate. N144 carries an N-linked (GlcNAc...) asparagine; by host glycan. D149 acts as the Proton donor/acceptor in catalysis. Residue R150 participates in substrate binding. E275–E276 serves as a coordination point for substrate. R291 contacts substrate. Position 292 (D292) interacts with Ca(2+). N293 is a glycosylation site (N-linked (GlcNAc...) asparagine; by host). Residues G296 and D322 each contribute to the Ca(2+) site. R368 contacts substrate. N398 carries an N-linked (GlcNAc...) asparagine; by host glycan. Residue Y402 is the Nucleophile of the active site.

Belongs to the glycosyl hydrolase 34 family. In terms of assembly, homotetramer. The cofactor is Ca(2+). Post-translationally, N-glycosylated.

The protein resides in the virion membrane. It is found in the host apical cell membrane. It carries out the reaction Hydrolysis of alpha-(2-&gt;3)-, alpha-(2-&gt;6)-, alpha-(2-&gt;8)- glycosidic linkages of terminal sialic acid residues in oligosaccharides, glycoproteins, glycolipids, colominic acid and synthetic substrates.. Its activity is regulated as follows. Inhibited by the neuraminidase inhibitors zanamivir (Relenza) and oseltamivir (Tamiflu). These drugs interfere with the release of progeny virus from infected cells and are effective against all influenza strains. Resistance to neuraminidase inhibitors is quite rare. Its function is as follows. Catalyzes the removal of terminal sialic acid residues from viral and cellular glycoconjugates. Cleaves off the terminal sialic acids on the glycosylated HA during virus budding to facilitate virus release. Additionally helps virus spread through the circulation by further removing sialic acids from the cell surface. These cleavages prevent self-aggregation and ensure the efficient spread of the progeny virus from cell to cell. Otherwise, infection would be limited to one round of replication. Described as a receptor-destroying enzyme because it cleaves a terminal sialic acid from the cellular receptors. May facilitate viral invasion of the upper airways by cleaving the sialic acid moieties on the mucin of the airway epithelial cells. Likely to plays a role in the budding process through its association with lipid rafts during intracellular transport. May additionally display a raft-association independent effect on budding. Plays a role in the determination of host range restriction on replication and virulence. Sialidase activity in late endosome/lysosome traffic seems to enhance virus replication. This Aves protein is Neuraminidase.